A 466-amino-acid polypeptide reads, in one-letter code: MKKNNERVNTNPSLISKSYNMKKRPVIGTRRHFARKEIESDSDDEDDIFLAGERKKYLQNQSYERRKQKNEHGNNLTLQEELLRHEAYEKNEEIANENDVDQVNLMKYFVHMDNISPVTTNGSLKESLRKYSSIIAVNIFSETGDLKKGIAIFQDLSDAEQAVQYLSNCKIDGRLISATITNHPKRLPNAEHLESSTKTKDESQDKDKLTKLDRAKLEWLIQGLNCEKGSIGNLLCFAVEHVNNHVEITDAFLKEFFNDQPTDDTKVYDDDYINERGEKKLSLIYLMNDILFNGISGTSLVWRYRFSFEPHVERLLDDLYLFSKRLGGRIKEDIFCKKVVKVIEVWKTWIAFQEETLERAWRNFSGNTPQSPQINSAALKVETKNSWTAISEETEGLQDDEEYNGIPVDVNELLNVEFISQIPMSTETSSSSSPQPTEERKAKFKPSFTQGTFVSKRMRMHAEDLF.

A disordered region spans residues 1–22; sequence MKKNNERVNTNPSLISKSYNMK. Residues 7–19 show a composition bias toward polar residues; sequence RVNTNPSLISKSY. 2 positions are modified to phosphoserine: Ser40 and Ser42. The RRM domain maps to 108 to 183; that stretch reads YFVHMDNISP…RLISATITNH (76 aa). Residues 186–207 are disordered; sequence RLPNAEHLESSTKTKDESQDKD. Positions 188–207 are enriched in basic and acidic residues; sequence PNAEHLESSTKTKDESQDKD. Positions 209–368 constitute a CID domain; the sequence is LTKLDRAKLE…RAWRNFSGNT (160 aa). Ser371 is subject to Phosphoserine. The span at 425–436 shows a compositional bias: low complexity; the sequence is STETSSSSSPQP. The tract at residues 425-448 is disordered; the sequence is STETSSSSSPQPTEERKAKFKPSF.

It localises to the nucleus. The protein resides in the cytoplasm. This is an uncharacterized protein from Schizosaccharomyces pombe (strain 972 / ATCC 24843) (Fission yeast).